A 241-amino-acid polypeptide reads, in one-letter code: Uracil-DNA glycosylase (241 aa).

Aspartate 68 serves as the catalytic Proton acceptor.

The protein belongs to the uracil-DNA glycosylase (UDG) superfamily. UNG family.

It is found in the cytoplasm. It catalyses the reaction Hydrolyzes single-stranded DNA or mismatched double-stranded DNA and polynucleotides, releasing free uracil.. In terms of biological role, excises uracil residues from the DNA which can arise as a result of misincorporation of dUMP residues by DNA polymerase or due to deamination of cytosine. In Sinorhizobium medicae (strain WSM419) (Ensifer medicae), this protein is Uracil-DNA glycosylase.